The primary structure comprises 541 residues: Chaperonin GroEL 1 (541 aa).

ATP-binding positions include 29-32 (TLGP), 86-90 (DGTTT), Gly413, 479-481 (NAA), and Asp495.

This sequence belongs to the chaperonin (HSP60) family. In terms of assembly, forms a cylinder of 14 subunits composed of two heptameric rings stacked back-to-back. Interacts with the co-chaperonin GroES.

It localises to the cytoplasm. The catalysed reaction is ATP + H2O + a folded polypeptide = ADP + phosphate + an unfolded polypeptide.. Its function is as follows. Together with its co-chaperonin GroES, plays an essential role in assisting protein folding. The GroEL-GroES system forms a nano-cage that allows encapsulation of the non-native substrate proteins and provides a physical environment optimized to promote and accelerate protein folding. The chain is Chaperonin GroEL 1 from Synechocystis sp. (strain ATCC 27184 / PCC 6803 / Kazusa).